A 225-amino-acid polypeptide reads, in one-letter code: Endonuclease V (225 aa).

Asp43 and Asp110 together coordinate Mg(2+).

Belongs to the endonuclease V family. It depends on Mg(2+) as a cofactor.

It localises to the cytoplasm. It catalyses the reaction Endonucleolytic cleavage at apurinic or apyrimidinic sites to products with a 5'-phosphate.. In terms of biological role, DNA repair enzyme involved in the repair of deaminated bases. Selectively cleaves double-stranded DNA at the second phosphodiester bond 3' to a deoxyinosine leaving behind the intact lesion on the nicked DNA. In Thermotoga sp. (strain RQ2), this protein is Endonuclease V.